The following is a 315-amino-acid chain: Olfactory receptor 5AN6 (315 aa).

Residues 1 to 29 (MPGGRNSTVITKFILVGFSDFPKLKLVLF) are Extracellular-facing. A helical transmembrane segment spans residues 30-50 (VIFLGSYLSTVVWNLGLIILI). The Cytoplasmic portion of the chain corresponds to 51–54 (RIDP). A helical transmembrane segment spans residues 55-75 (YLHTPMYFFLSNLSFLDFCYI). The Extracellular portion of the chain corresponds to 76–99 (SSTTPKMLSGFFQKSKSISFVGCT). A disulfide bridge links Cys-98 with Cys-180. The chain crosses the membrane as a helical span at residues 100 to 120 (MQYFIFSSLGLSECCLLAAMA). Residues 121–123 (YDR) lie on the Cytoplasmic side of the membrane. The helical transmembrane segment at 124 to 143 (YAAICNPLLYTAIMSPSLCV) threads the bilayer. His-144 is a topological domain (extracellular). The helical transmembrane segment at 145–165 (MVVGAYSTGLLGSLIQLCAIL) threads the bilayer. Over 166-202 (QLHFCGPNIINHFFCDLPQLLVLSCSETFPLQVLKFV) the chain is Cytoplasmic. The helical transmembrane segment at 203-223 (IAVIFGVASVIVILISYGYII) threads the bilayer. At 224 to 240 (GTILNISSVEGRSKAFN) the chain is on the extracellular side. A helical transmembrane segment spans residues 241 to 261 (TCASHLTAVTLFFGSGLFVYM). The Cytoplasmic segment spans residues 262 to 272 (RPSSNSSQGYD). The helical transmembrane segment at 273-293 (KMASVFYTVVIPMLNPLIYSL) threads the bilayer. Residues 294–315 (RNKEIKDALQRCKNKCFSQCHC) lie on the Extracellular side of the membrane.

The protein belongs to the G-protein coupled receptor 1 family. In terms of tissue distribution, localized in the dorsomedial and ventral region of the olfactory bulb.

The protein resides in the cell membrane. Functionally, odorant receptor specific for muscone. Muscone-binding causes a conformation change that triggers signaling via G(s)-class of G alpha protein GNAL, activating adenylyl cyclase. In Mus musculus (Mouse), this protein is Olfactory receptor 5AN6.